The sequence spans 930 residues: Protein ARABIDILLO 1 (930 aa).

The short motif at 3 to 8 is the Nuclear localization signal element; that stretch reads RRVRRK. The 47-residue stretch at 44–90 folds into the F-box domain; it reads FVDWISLPYDTVLQLFTCLNYRDRASLASTCKTWRCLGASSCLWTSL. 13 ARM repeats span residues 172–212, 244–285, 379–418, 428–467, 469–508, 510–552, 554–594, 600–639, 641–683, 685–724, 726–766, 790–831, and 835–875; these read RITS…KHCP, TSNI…TSSQ, PEGL…TFVV, CGRA…NLSV, ANIA…NLSV, EEHK…NLAA, DKCS…NLAA, NNNA…NLSF, DKNR…GLSV, EANS…NLAF, PGNA…YMFD, LDGA…QVTE, and IQEA…QFTI.

The protein belongs to the beta-catenin family. Interacts with SNL1. Interacts with MYB53, MYB92 and MYB93. In terms of tissue distribution, expressed ubiquitously, with higher levels in root tip, pericycle and vasculature.

The protein localises to the nucleus. Its function is as follows. Promotes lateral root initiation and development, independently of auxin (IAA) and abscisis acid (ABA). The polypeptide is Protein ARABIDILLO 1 (FBX5) (Arabidopsis thaliana (Mouse-ear cress)).